We begin with the raw amino-acid sequence, 392 residues long: Phosphoglycerate kinase (392 aa).

Substrate-binding positions include 21 to 23, R36, 59 to 62, R113, and R146; these read DFN and HLGR. ATP contacts are provided by residues K197, E319, and 345 to 348; that span reads GGDT.

The protein belongs to the phosphoglycerate kinase family. Monomer.

It localises to the cytoplasm. It carries out the reaction (2R)-3-phosphoglycerate + ATP = (2R)-3-phospho-glyceroyl phosphate + ADP. It functions in the pathway carbohydrate degradation; glycolysis; pyruvate from D-glyceraldehyde 3-phosphate: step 2/5. The sequence is that of Phosphoglycerate kinase from Francisella philomiragia subsp. philomiragia (strain ATCC 25017 / CCUG 19701 / FSC 153 / O#319-036).